The chain runs to 155 residues: uncharacterized protein (155 aa).

The span at 28–38 (KKGKDRPREDG) shows a compositional bias: basic and acidic residues. The interval 28–52 (KKGKDRPREDGTQQQPSESKGEAAC) is disordered.

This is an uncharacterized protein from Dryophytes versicolor (chameleon treefrog).